The sequence spans 194 residues: MGVRNIERLIEQRIKENPINPDILNLEEKVVEIRRTTRVMEGGRRFSFSTLAIVGDRNGHVGFGHGKAREVPPSIAKAIADAKKRIIKVALIEGTVPHDVYGEYDSAVVLLKPARRGTGVVAGGPMRPVLELLGVTDVLAKIVGRTTNPNAVVRATFDALLKLKSPEEVAKVRGLEEEKIKSVYRIYAGGVPVR.

The S5 DRBM domain occupies 26-89; it reads LEEKVVEIRR…ADAKKRIIKV (64 aa).

It belongs to the universal ribosomal protein uS5 family. Part of the 30S ribosomal subunit. Contacts proteins S4 and S8.

Functionally, with S4 and S12 plays an important role in translational accuracy. In terms of biological role, located at the back of the 30S subunit body where it stabilizes the conformation of the head with respect to the body. The protein is Small ribosomal subunit protein uS5 of Sulfurihydrogenibium sp. (strain YO3AOP1).